The following is a 311-amino-acid chain: Ribosomal RNA small subunit methyltransferase H (311 aa).

Residues 39–41 (GGH), Asp59, Phe87, Asp102, and His109 each bind S-adenosyl-L-methionine.

The protein belongs to the methyltransferase superfamily. RsmH family.

The protein localises to the cytoplasm. The enzyme catalyses cytidine(1402) in 16S rRNA + S-adenosyl-L-methionine = N(4)-methylcytidine(1402) in 16S rRNA + S-adenosyl-L-homocysteine + H(+). Functionally, specifically methylates the N4 position of cytidine in position 1402 (C1402) of 16S rRNA. This is Ribosomal RNA small subunit methyltransferase H from Porphyromonas gingivalis (strain ATCC 33277 / DSM 20709 / CIP 103683 / JCM 12257 / NCTC 11834 / 2561).